Reading from the N-terminus, the 106-residue chain is Nucleoid-associated protein DP1429 (106 aa).

This sequence belongs to the YbaB/EbfC family. Homodimer.

It is found in the cytoplasm. Its subcellular location is the nucleoid. Binds to DNA and alters its conformation. May be involved in regulation of gene expression, nucleoid organization and DNA protection. The sequence is that of Nucleoid-associated protein DP1429 from Desulfotalea psychrophila (strain LSv54 / DSM 12343).